We begin with the raw amino-acid sequence, 174 residues long: Endoribonuclease YbeY (174 aa).

Residues His129, His133, and His139 each coordinate Zn(2+).

This sequence belongs to the endoribonuclease YbeY family. It depends on Zn(2+) as a cofactor.

It is found in the cytoplasm. Functionally, single strand-specific metallo-endoribonuclease involved in late-stage 70S ribosome quality control and in maturation of the 3' terminus of the 16S rRNA. The chain is Endoribonuclease YbeY from Lactobacillus delbrueckii subsp. bulgaricus (strain ATCC 11842 / DSM 20081 / BCRC 10696 / JCM 1002 / NBRC 13953 / NCIMB 11778 / NCTC 12712 / WDCM 00102 / Lb 14).